Reading from the N-terminus, the 565-residue chain is Arginine--tRNA ligase (565 aa).

The short motif at Pro120–His130 is the 'HIGH' region element.

Belongs to the class-I aminoacyl-tRNA synthetase family. In terms of assembly, monomer.

Its subcellular location is the cytoplasm. It catalyses the reaction tRNA(Arg) + L-arginine + ATP = L-arginyl-tRNA(Arg) + AMP + diphosphate. The sequence is that of Arginine--tRNA ligase from Clostridium perfringens (strain 13 / Type A).